Here is a 493-residue protein sequence, read N- to C-terminus: 3-octaprenyl-4-hydroxybenzoate carboxy-lyase (493 aa).

Asn172 is a Mn(2+) binding site. Prenylated FMN is bound by residues 175–177 (IYR), 189–191 (RWL), and 194–195 (RG). Glu238 is a binding site for Mn(2+). Asp287 serves as the catalytic Proton donor.

The protein belongs to the UbiD family. As to quaternary structure, homohexamer. The cofactor is prenylated FMN. It depends on Mn(2+) as a cofactor.

It is found in the cell membrane. It catalyses the reaction a 4-hydroxy-3-(all-trans-polyprenyl)benzoate + H(+) = a 2-(all-trans-polyprenyl)phenol + CO2. It participates in cofactor biosynthesis; ubiquinone biosynthesis. Functionally, catalyzes the decarboxylation of 3-octaprenyl-4-hydroxy benzoate to 2-octaprenylphenol, an intermediate step in ubiquinone biosynthesis. This chain is 3-octaprenyl-4-hydroxybenzoate carboxy-lyase, found in Shewanella sediminis (strain HAW-EB3).